The chain runs to 344 residues: Cell cycle control protein 50C (344 aa).

Residues 1 to 34 (MEETPQHCLSRLPDNSALKQQELPAHRLYFTARR) are Cytoplasmic-facing. The helical transmembrane segment at 35–55 (VLFVFFTTGIFCLCMGIILIL) threads the bilayer. The Extracellular segment spans residues 56-306 (SARSTQEIEI…STLTWCGGNS (251 aa)). Residues Asn-66 and Asn-261 are each glycosylated (N-linked (GlcNAc...) asparagine). A helical membrane pass occupies residues 307–327 (LFLGLAYTVTGAITWLASFTM). The Cytoplasmic portion of the chain corresponds to 328-344 (MAIHITLKNKQMSFFHQ).

This sequence belongs to the CDC50/LEM3 family. In terms of tissue distribution, specifically expressed in testis.

It localises to the membrane. The polypeptide is Cell cycle control protein 50C (TMEM30C) (Macaca fascicularis (Crab-eating macaque)).